The chain runs to 1358 residues: Regulatory protein SIR4 (1358 aa).

A compositionally biased stretch (polar residues) spans 1–15; the sequence is MPNDNKTPNRSSTPK. Disordered regions lie at residues 1–98, 252–277, 356–466, 498–544, 677–726, 752–787, and 913–970; these read MPND…PHSN, SLSV…SPGI, HDEK…PPEI, VQGE…ISNG, ASTE…EDEQ, VSDS…DLDT, and HSQE…ENLS. The segment covering 26 to 39 has biased composition (basic and acidic residues); sequence KIPEREEKSNEVKT. Polar residues-rich tracts occupy residues 49-66 and 75-96; these read KSKN…SPHQ and HKQL…SFPH. Over residues 373-388 the composition is skewed to basic and acidic residues; sequence QKMKEDADLKRMEILK. Residues 428-437 are compositionally biased toward polar residues; it reads QENNYNSTSR. The span at 452–464 shows a compositional bias: basic and acidic residues; sequence KNGENKKIGKRPP. The span at 507–517 shows a compositional bias: polar residues; the sequence is RNNTLNVTPSK. Serine 692 bears the Phosphoserine mark. Positions 706–720 are enriched in polar residues; sequence FPVSLSQPSKKSFAN. The segment covering 754 to 766 has biased composition (acidic residues); that stretch reads DSDDSSSDNDSLT. A compositionally biased stretch (basic and acidic residues) spans 777-787; it reads NEIKVTNDLDT. A compositionally biased stretch (polar residues) spans 916–932; that stretch reads EQNSSSAKPSQIPTVSS. Residue lysine 1128 forms a Glycyl lysine isopeptide (Lys-Gly) (interchain with G-Cter in SUMO) linkage. The stretch at 1271 to 1347 forms a coiled coil; sequence LSFVDIVLSK…DAKINKLMEK (77 aa).

As to quaternary structure, homodimer. Interacts with MPS3. Interacts with RIS1. Interacts with SIR1, SIR2 and SIR3. Interacts with YKU80. Interacts with UBP10. Interacts with RAP1 (via C-terminus).

The protein resides in the nucleus. In terms of biological role, the proteins SIR1 through SIR4 are required for transcriptional repression of the silent mating type loci, HML and HMR. The proteins SIR2 through SIR4 repress mulitple loci by modulating chromatin structure. Involves the compaction of chromatin fiber into a more condensed form. In Saccharomyces cerevisiae (strain ATCC 204508 / S288c) (Baker's yeast), this protein is Regulatory protein SIR4 (SIR4).